The following is a 508-amino-acid chain: Bestrophin-2 (508 aa).

At 1-31 the chain is on the cytoplasmic side; that stretch reads MTVTYTARVANARFGGFSQLLLLWRGSIYKL. Ala10 provides a ligand contact to Ca(2+). A helical membrane pass occupies residues 32–51; that stretch reads LWRELLCFLGLYMALSAAYR. Over 52-60 the chain is Extracellular; the sequence is FLLAEEQKR. Residues 61–82 form a helical membrane-spanning segment; the sequence is YFEKLVIYCDQYASLIPVSFVL. Over 83–238 the chain is Cytoplasmic; the sequence is GFYVTLVVHR…WISIPLVYTQ (156 aa). A helical membrane pass occupies residues 239-255; sequence VVTIAVYSYFLACLIGR. The Extracellular segment spans residues 256–274; that stretch reads QFLDPAQGYKDHTLDLCVP. The chain crosses the membrane as a helical span at residues 275 to 288; that stretch reads IFTLLQFFFYAGWL. At 289 to 508 the chain is on the cytoplasmic side; it reads KVAEQLINPF…PIGEEEESPA (220 aa). The Ca(2+) site is built by Gln293, Asn296, Asp301, and Asp304. The segment at 455 to 508 is disordered; the sequence is LREPELEPPACPEPPAPIPGPTPEPFTTVSIPGPRAPAPPWLPSPIGEEEESPA. Pro residues-rich tracts occupy residues 461–478 and 488–497; these read EPPA…PTPE and PRAPAPPWLP.

This sequence belongs to the anion channel-forming bestrophin (TC 1.A.46) family. Calcium-sensitive chloride channel subfamily. Pentamer. Interacts with GLUL; this interaction tethers a fraction of GLUL to the membrane, causing a decrease of cytosolic glutamine synthase (GS) activity and inhibits the chloride channel activity of BEST2 by affecting the gating at the aperture in the absence of intracellular glutamate. Expressed in mucin-secreting colonic goblet cells.

It localises to the cell membrane. Its subcellular location is the basolateral cell membrane. It catalyses the reaction chloride(in) = chloride(out). It carries out the reaction hydrogencarbonate(in) = hydrogencarbonate(out). The enzyme catalyses L-glutamate(out) = L-glutamate(in). The catalysed reaction is iodide(out) = iodide(in). It catalyses the reaction L-glutamine(out) = L-glutamine(in). Its activity is regulated as follows. Chloride channel activity is allosterically inhibited by GLUL/glutamine synthase (GS) which affects the gating at the aperture in the absence of intracellular glutamate. Inhibitory effect of GLUL is relieved upon increasing of intracellular level of L-glutamate. In terms of biological role, ligand-gated anion channel that allows the movement of anions across cell membranes when activated by calcium (Ca2+). Transports a large specter of anions, namely mediates the movement of chloride, L-glutamate and iodide. Calcium-binding triggers the dilation of the aperture, but calcium-dependent gating is only effective when the size of the passing anion is bigger than the closed aperture. Mediates the calcium-activated hydrogencarbonate movement and participates in colonic hydrogencarbonate secretion concomitant with mucin secretion. In non-pigmented epithelium (NPE), mediates the efflux of intracellular L-glutamate; binding of intracellular L-glutamate activates and open both the neck and the aperture of the channel, leading to L-glutamate exit promoting chloride influx movement from the extracellular side in trans. Also exhibits a directional permeability for intracellular glutamine, in a similar manner as for L-glutamate. This Mus musculus (Mouse) protein is Bestrophin-2.